A 637-amino-acid polypeptide reads, in one-letter code: Sodium-dependent phosphate transport protein 2A (637 aa).

Topologically, residues 1-103 (MMSYSERLGG…LAQVGTKLLK (103 aa)) are cytoplasmic. S14 and S34 each carry phosphoserine. The helical transmembrane segment at 104–125 (VPLMLGFLYLFVCSLDVLSSAF) threads the bilayer. At 126–145 (QLAGGKVAGDIFKDNAILSN) the chain is on the extracellular side. A helical membrane pass occupies residues 146–163 (PVAGLVVGILVTVLVQSS). Topologically, residues 164–216 (STSTSIIVSMVSSGLLEVSSAIPIIMGSNIGTSVTNTIVALMQAGDRTDFRRA) are cytoplasmic. The chain crosses the membrane as a helical span at residues 217-236 (FAGATVHDCFNWLSVLVLLP). 2 disulfide bridges follow: C225/C520 and C306/C334. At 237 to 345 (LEAATGYLHH…HIFVDTGLPD (109 aa)) the chain is on the extracellular side. N-linked (GlcNAc...) asparagine glycosylation is found at N298 and N328. A helical membrane pass occupies residues 346 to 368 (LAVGLILLAGSLVVLCTCLILLV). Over 369–410 (KMLNSLLKGQVANVIQKVINTDFPAPFTWVTGYFAMVVGASM) the chain is Cytoplasmic. A helical transmembrane segment spans residues 411–434 (TFVVQSSSVFTSAITPLIGLGVIS). Over 435–464 (IERAYPLTLGSNIGTTTTAILAALASPREK) the chain is Extracellular. The chain crosses the membrane as a helical span at residues 465–485 (LSSSFQIALCHFFFNISGILL). The Cytoplasmic portion of the chain corresponds to 486-511 (WYPLPCTRLPIRMAKALGKRTAKYRW). T506 is modified (phosphothreonine; by PKC). The chain crosses the membrane as a helical span at residues 512 to 532 (FAVLYLLVCFLLLPSLVFGIS). Residues 533-537 (MAGWQ) lie on the Extracellular side of the membrane. The helical transmembrane segment at 538–559 (AMVGVGTPFGALLAFVVLVNVL) threads the bilayer. Residues 560-637 (QSRSPGHLPK…LPAHHNATRL (78 aa)) lie on the Cytoplasmic side of the membrane. A Phosphoserine modification is found at S605. T621 is modified (phosphothreonine). Position 623 is a phosphoserine (S623).

It belongs to the SLC34A transporter family. In terms of assembly, interacts via its C-terminal region with NHERF4. Interacts with NHERF1. Interacts with TMEM174; regulates SLC34A1 internalization by PTH and FGF23. In terms of tissue distribution, kidney.

It is found in the apical cell membrane. It localises to the cell membrane. It carries out the reaction 3 Na(+)(out) + phosphate(out) = 3 Na(+)(in) + phosphate(in). Transport activity is significantly increased in response to dietary phosphate deprivation. Involved in actively transporting phosphate into cells via Na(+) cotransport in the renal brush border membrane. The cotransport has a Na(+):Pi stoichiometry of 3:1 and is electrogenic. The chain is Sodium-dependent phosphate transport protein 2A from Rattus norvegicus (Rat).